A 555-amino-acid polypeptide reads, in one-letter code: Beta-caryophyllene synthase (555 aa).

Mg(2+)-binding residues include D313, D317, D456, and E464. Residues 313 to 317 carry the DDXXD motif motif; it reads DDIYD.

The protein belongs to the terpene synthase family. Mg(2+) is required as a cofactor.

It catalyses the reaction (2E,6E)-farnesyl diphosphate = (+)-(E)-beta-caryophyllene + diphosphate. It participates in secondary metabolite biosynthesis; terpenoid biosynthesis. Functionally, sesquiterpene synthase converting farnesyl diphosphate to beta-caryophyllene as the major product. The protein is Beta-caryophyllene synthase of Phyla dulcis (Aztec sweet herb).